Consider the following 195-residue polypeptide: MRLTLTSRSRLFVLSSLLFISTFDVLSAQAAPANTAPSFWQRAGDNLSDTWHHWQSQDLYVPVMTWHNRWTYDKEKTDRYNERPWGAGYGVSRLDCDGDWHSLYMMAFKDSFNKWEPIGGYGYEKRWRPLEDQDFQLGLGFTAGVTLRDNWNYIPLPVLLPMASLSYQRLSFQATYIPGTYNNGNVFFAWLRWQF.

The N-terminal stretch at Met-1–Ala-30 is a signal peptide. Residues His-67, Asp-110, and Ser-111 contribute to the active site.

Belongs to the lipid A palmitoyltransferase family. Homodimer.

It is found in the cell outer membrane. The catalysed reaction is a lipid A + a 1,2-diacyl-sn-glycero-3-phosphocholine = a hepta-acyl lipid A + a 2-acyl-sn-glycero-3-phosphocholine. The enzyme catalyses a lipid IVA + a 1,2-diacyl-sn-glycero-3-phosphocholine = a lipid IVB + a 2-acyl-sn-glycero-3-phosphocholine. It catalyses the reaction a lipid IIA + a 1,2-diacyl-sn-glycero-3-phosphocholine = a lipid IIB + a 2-acyl-sn-glycero-3-phosphocholine. In terms of biological role, transfers a fatty acid residue from the sn-1 position of a phospholipid to the N-linked hydroxyfatty acid chain on the proximal unit of lipid A or its precursors. This Dickeya chrysanthemi (strain Ech1591) (Dickeya zeae (strain Ech1591)) protein is Lipid A acyltransferase PagP.